Reading from the N-terminus, the 214-residue chain is tRNA (guanine-N(7)-)-methyltransferase (214 aa).

Glu-44, Glu-69, Asp-96, and Asp-118 together coordinate S-adenosyl-L-methionine. The active site involves Asp-118. Residues Lys-122, Asp-154, and 191 to 194 (TEYE) contribute to the substrate site.

This sequence belongs to the class I-like SAM-binding methyltransferase superfamily. TrmB family.

It carries out the reaction guanosine(46) in tRNA + S-adenosyl-L-methionine = N(7)-methylguanosine(46) in tRNA + S-adenosyl-L-homocysteine. The protein operates within tRNA modification; N(7)-methylguanine-tRNA biosynthesis. Functionally, catalyzes the formation of N(7)-methylguanine at position 46 (m7G46) in tRNA. This is tRNA (guanine-N(7)-)-methyltransferase from Listeria innocua serovar 6a (strain ATCC BAA-680 / CLIP 11262).